The primary structure comprises 237 residues: Type III pantothenate kinase (237 aa).

6–13 provides a ligand contact to ATP; sequence DAGNSRVK. Substrate contacts are provided by residues Tyr-86 and 93–96; that span reads GADR. Asp-95 functions as the Proton acceptor in the catalytic mechanism. ATP is bound at residue Thr-118. A substrate-binding site is contributed by Thr-168.

It belongs to the type III pantothenate kinase family. Homodimer. NH4(+) is required as a cofactor. It depends on K(+) as a cofactor.

It localises to the cytoplasm. It catalyses the reaction (R)-pantothenate + ATP = (R)-4'-phosphopantothenate + ADP + H(+). Its pathway is cofactor biosynthesis; coenzyme A biosynthesis; CoA from (R)-pantothenate: step 1/5. Its function is as follows. Catalyzes the phosphorylation of pantothenate (Pan), the first step in CoA biosynthesis. The protein is Type III pantothenate kinase of Chromobacterium violaceum (strain ATCC 12472 / DSM 30191 / JCM 1249 / CCUG 213 / NBRC 12614 / NCIMB 9131 / NCTC 9757 / MK).